Consider the following 73-residue polypeptide: Small ribosomal subunit protein eS27 (73 aa).

The Zn(2+) site is built by C28, C31, C47, and C50. Residues 28-50 (CPKCGNRQVVFSHSTFRARCLNC) form a C4-type zinc finger.

Belongs to the eukaryotic ribosomal protein eS27 family. Part of the 30S ribosomal subunit. Requires Zn(2+) as cofactor.

The protein is Small ribosomal subunit protein eS27 of Aeropyrum pernix (strain ATCC 700893 / DSM 11879 / JCM 9820 / NBRC 100138 / K1).